A 430-amino-acid polypeptide reads, in one-letter code: Histidine--tRNA ligase (430 aa).

It belongs to the class-II aminoacyl-tRNA synthetase family. As to quaternary structure, homodimer.

It is found in the cytoplasm. The catalysed reaction is tRNA(His) + L-histidine + ATP = L-histidyl-tRNA(His) + AMP + diphosphate + H(+). In Acinetobacter baumannii (strain SDF), this protein is Histidine--tRNA ligase.